Here is a 207-residue protein sequence, read N- to C-terminus: Guanylate kinase (207 aa).

One can recognise a Guanylate kinase-like domain in the interval 10-187 (GFFIVLSAAS…AVERLQVIYQ (178 aa)). Residue 17 to 24 (AASGTGKT) participates in ATP binding.

Belongs to the guanylate kinase family.

It is found in the cytoplasm. It catalyses the reaction GMP + ATP = GDP + ADP. In terms of biological role, essential for recycling GMP and indirectly, cGMP. In Syntrophus aciditrophicus (strain SB), this protein is Guanylate kinase.